Consider the following 916-residue polypeptide: Translation initiation factor IF-2 (916 aa).

Positions 50–326 (NRDKESTSQP…NSTLQQGFNK (277 aa)) are disordered. Over residues 109 to 241 (AQREAEEKAR…LAEENAEKWT (133 aa)) the composition is skewed to basic and acidic residues. Basic residues predominate over residues 277–291 (GRGRAAKAPRPKKNN). A compositionally biased stretch (basic and acidic residues) spans 292–304 (RHSEKADREEARA). The 170-residue stretch at 415–584 (SRAPVVTIMG…LLQAEVLELK (170 aa)) folds into the tr-type G domain. The tract at residues 424–431 (GHVDHGKT) is G1. 424 to 431 (GHVDHGKT) lines the GTP pocket. Positions 449 to 453 (GITQH) are G2. Positions 470–473 (DTPG) are G3. GTP is bound by residues 470–474 (DTPGH) and 524–527 (NKID). A G4 region spans residues 524-527 (NKID). The segment at 560-562 (SAK) is G5.

This sequence belongs to the TRAFAC class translation factor GTPase superfamily. Classic translation factor GTPase family. IF-2 subfamily.

It localises to the cytoplasm. Functionally, one of the essential components for the initiation of protein synthesis. Protects formylmethionyl-tRNA from spontaneous hydrolysis and promotes its binding to the 30S ribosomal subunits. Also involved in the hydrolysis of GTP during the formation of the 70S ribosomal complex. This Proteus mirabilis (strain HI4320) protein is Translation initiation factor IF-2.